The chain runs to 258 residues: Ureidoacrylate amidohydrolase RutB (258 aa).

The segment at 1-23 (MDRPTTYPMDQPAGFRDAQGRHG) is disordered. The active-site Proton acceptor is Asp-47. Lys-156 is an active-site residue. The active-site Nucleophile is Cys-189.

This sequence belongs to the isochorismatase family. RutB subfamily.

It carries out the reaction (Z)-3-ureidoacrylate + H2O + H(+) = (Z)-3-aminoacrylate + NH4(+) + CO2. It catalyses the reaction (Z)-3-ureidoacrylate + H2O = (Z)-3-aminoacrylate + carbamate + H(+). The catalysed reaction is (Z)-2-methylureidoacrylate + H2O + H(+) = (Z)-2-methylaminoacrylate + NH4(+) + CO2. In terms of biological role, hydrolyzes ureidoacrylate to form aminoacrylate and carbamate. The carbamate hydrolyzes spontaneously, thereby releasing one of the nitrogen atoms of the pyrimidine ring as ammonia and one of its carbon atoms as CO2. This is Ureidoacrylate amidohydrolase RutB from Methylobacterium radiotolerans (strain ATCC 27329 / DSM 1819 / JCM 2831 / NBRC 15690 / NCIMB 10815 / 0-1).